The sequence spans 281 residues: Probable endonuclease 4 (281 aa).

Residues H67, H107, E144, D178, H181, H215, D228, H230, and E260 each coordinate Zn(2+).

Belongs to the AP endonuclease 2 family. Zn(2+) serves as cofactor.

It carries out the reaction Endonucleolytic cleavage to 5'-phosphooligonucleotide end-products.. Its function is as follows. Endonuclease IV plays a role in DNA repair. It cleaves phosphodiester bonds at apurinic or apyrimidinic (AP) sites, generating a 3'-hydroxyl group and a 5'-terminal sugar phosphate. In Methanocorpusculum labreanum (strain ATCC 43576 / DSM 4855 / Z), this protein is Probable endonuclease 4.